A 316-amino-acid polypeptide reads, in one-letter code: tRNA dimethylallyltransferase (316 aa).

Position 17-24 (glycine 17–threonine 24) interacts with ATP. Threonine 19–threonine 24 contributes to the substrate binding site. Interaction with substrate tRNA regions lie at residues aspartate 42–leucine 45, glutamine 166–arginine 170, and arginine 247–arginine 252.

This sequence belongs to the IPP transferase family. In terms of assembly, monomer. Mg(2+) serves as cofactor.

It catalyses the reaction adenosine(37) in tRNA + dimethylallyl diphosphate = N(6)-dimethylallyladenosine(37) in tRNA + diphosphate. In terms of biological role, catalyzes the transfer of a dimethylallyl group onto the adenine at position 37 in tRNAs that read codons beginning with uridine, leading to the formation of N6-(dimethylallyl)adenosine (i(6)A). This chain is tRNA dimethylallyltransferase, found in Klebsiella pneumoniae (strain 342).